The following is a 543-amino-acid chain: Steroid receptor seven-up, isoforms B/C (543 aa).

Residues 38–191 (PPHSAWHEPP…HSQSSNSGSQ (154 aa)) form a disordered region. Positions 56–68 (AASAGPGTTTGSV) are enriched in low complexity. The span at 83 to 101 (QQSAVIKQDLSCPSLNQAG) shows a compositional bias: polar residues. The span at 122 to 141 (GSAGGHHSGSGSGSGSGVNP) shows a compositional bias: gly residues. A compositionally biased stretch (polar residues) spans 158–170 (MLTSIKGQPTGCG). The segment covering 171–191 (STTPSSQANSSHSQSSNSGSQ) has biased composition (low complexity). The nuclear receptor DNA-binding region spans 197–272 (NIECVVCGDK…MGMRREAVQR (76 aa)). 2 consecutive NR C4-type zinc fingers follow at residues 200–220 (CVVC…CEGC) and 236–260 (CRGS…LKKC). The 226-residue stretch at 307-532 (YLSSYISLLL…TLIRDMLLSG (226 aa)) folds into the NR LBD domain.

The protein belongs to the nuclear hormone receptor family. NR2 subfamily. As to expression, expressed in several embryonic tissues; dorsal vessel, oenocyte and fat body. CNS expression is dynamic and confined to temporally restricted subsections of the NB lineage; expressed in many NB and GMCs, but only a small number of neurons.

The protein resides in the nucleus. Functionally, receptor that is required in photoreceptors R1, R3, R4 and R6 during eye development; generation of the ganglion mother cell-2 (GMC-2) fate in the nb7-3 lineage, coinciding with the transition in the expression of HB to KR in the neuroblasts (NBs). The protein is Steroid receptor seven-up, isoforms B/C (svp) of Drosophila melanogaster (Fruit fly).